The sequence spans 360 residues: Membrane-bound lytic murein transglycosylase C (360 aa).

The N-terminal stretch at 1–16 (MKKIFALALIAPLLIS) is a signal peptide. Cys17 is lipidated: N-palmitoyl cysteine. Cys17 carries the S-diacylglycerol cysteine lipid modification.

The protein belongs to the transglycosylase Slt family.

The protein resides in the cell outer membrane. It catalyses the reaction Exolytic cleavage of the (1-&gt;4)-beta-glycosidic linkage between N-acetylmuramic acid (MurNAc) and N-acetylglucosamine (GlcNAc) residues in peptidoglycan, from either the reducing or the non-reducing ends of the peptidoglycan chains, with concomitant formation of a 1,6-anhydrobond in the MurNAc residue.. Murein-degrading enzyme. May play a role in recycling of muropeptides during cell elongation and/or cell division. This Cronobacter sakazakii (strain ATCC BAA-894) (Enterobacter sakazakii) protein is Membrane-bound lytic murein transglycosylase C.